Consider the following 301-residue polypeptide: Cutinase (301 aa).

Residues 1 to 40 (MAVMTPRRERSSLLSRALQVTAAAATALVTAVSLAAPAHA) form the signal peptide. A poly(ethylene terephthalate)-binding site is contributed by Tyr100. The active-site Nucleophile is Ser170. 2 residues coordinate poly(ethylene terephthalate): Met171 and Trp195. Active-site charge relay system residues include Asp216 and His248. A disulfide bridge connects residues Cys281 and Cys299.

Belongs to the AB hydrolase superfamily.

The protein localises to the secreted. It localises to the periplasm. It catalyses the reaction a butanoate ester + H2O = an aliphatic alcohol + butanoate + H(+). It carries out the reaction (ethylene terephthalate)(n) + H2O = (ethylene terephthalate)(n-1) + 4-[(2-hydroxyethoxy)carbonyl]benzoate + H(+). The catalysed reaction is cutin + H2O = cutin monomers.. With respect to regulation, activated by magnesium ions. Activated by calcium ions. Inhibited by the serine hydrolase inhibitor phenylmethanesulfonyl fluoride (PMSF). Its function is as follows. Catalyzes the hydrolysis of cutin, a polyester that forms the structure of plant cuticle. Shows esterase activity towards p-nitrophenol-linked aliphatic esters (pNP-aliphatic esters). Also hydrolyzes the triglyceride triolein. Capable of degrading the plastic poly(ethylene terephthalate) (PET), the most abundant polyester plastic in the world. The sequence is that of Cutinase from Thermobifida fusca (strain YX).